A 598-amino-acid chain; its full sequence is Phenylalanine--tRNA ligase beta subunit, cytoplasmic (598 aa).

The 81-residue stretch at 303-383 folds into the B5 domain; it reads LAVYDMEVPL…IAYGFNNIPT (81 aa). Residues aspartate 361, aspartate 367, glutamate 370, and aspartate 371 each contribute to the Mg(2+) site.

It belongs to the phenylalanyl-tRNA synthetase beta subunit family. Type 2 subfamily. As to quaternary structure, tetramer of two alpha and two beta subunits. It depends on Mg(2+) as a cofactor.

The protein resides in the cytoplasm. It localises to the cytosol. The enzyme catalyses tRNA(Phe) + L-phenylalanine + ATP = L-phenylalanyl-tRNA(Phe) + AMP + diphosphate + H(+). In Arabidopsis thaliana (Mouse-ear cress), this protein is Phenylalanine--tRNA ligase beta subunit, cytoplasmic.